Here is a 166-residue protein sequence, read N- to C-terminus: tRNA-acetylating toxin (166 aa).

A disordered region spans residues 1-22; that stretch reads MSGYSAPRRISDADDVTSFSSG. Residues 1 to 162 enclose the N-acetyltransferase domain; it reads MSGYSAPRRI…LMLLMKDARA (162 aa). The active site involves Tyr-138.

This sequence belongs to the acetyltransferase family. GNAT subfamily. As to quaternary structure, homodimer, forms a complex with cognate antitoxin TacA.

The catalysed reaction is glycyl-tRNA(Gly) + acetyl-CoA = N-acetylglycyl-tRNA(Gly) + CoA + H(+). In terms of biological role, toxic component of a type II toxin-antitoxin (TA) system. Overexpression of this gene alone in M.smegmatis inhibits growth, while overexpression of the tacA-tacT operon does not. Acetylates glycyl-tRNA(Gly) but not other tRNAs, blocks in vitro translation in the presence, but not absence, of acetyl-coenzyme A. Peptidyl-tRNA hydrolase (pth) counteracts the product of this enzyme in vitro. Neutralized by cognate antitoxin TacA. Does not seem to be active in laboratory growth conditions. Its function is as follows. TacA-TacT both represses and derepresses expression of its own operon. The protein is tRNA-acetylating toxin of Mycobacterium tuberculosis (strain ATCC 25618 / H37Rv).